A 544-amino-acid polypeptide reads, in one-letter code: Chaperonin GroEL 1 (544 aa).

ATP contacts are provided by residues 29–32, 86–90, Gly-413, 476–478, and Asp-492; these read TLGP, DGTTT, and NAA. The disordered stretch occupies residues 523–544; that stretch reads EPVKAPAGGGDMDGMGGMGGMM. Residues 529–544 show a composition bias toward gly residues; the sequence is AGGGDMDGMGGMGGMM.

This sequence belongs to the chaperonin (HSP60) family. As to quaternary structure, forms a cylinder of 14 subunits composed of two heptameric rings stacked back-to-back. Interacts with the co-chaperonin GroES.

The protein resides in the cytoplasm. It carries out the reaction ATP + H2O + a folded polypeptide = ADP + phosphate + an unfolded polypeptide.. Its function is as follows. Together with its co-chaperonin GroES, plays an essential role in assisting protein folding. The GroEL-GroES system forms a nano-cage that allows encapsulation of the non-native substrate proteins and provides a physical environment optimized to promote and accelerate protein folding. This is Chaperonin GroEL 1 from Cutibacterium acnes (strain DSM 16379 / KPA171202) (Propionibacterium acnes).